The chain runs to 378 residues: Erythronate-4-phosphate dehydrogenase (378 aa).

Residues Ser-45 and Thr-66 each coordinate substrate. The NAD(+) site is built by Asp-146 and Thr-175. Residue Arg-208 is part of the active site. Asp-232 serves as a coordination point for NAD(+). Residue Glu-237 is part of the active site. Catalysis depends on His-254, which acts as the Proton donor. An NAD(+)-binding site is contributed by Gly-257. Tyr-258 is a binding site for substrate.

The protein belongs to the D-isomer specific 2-hydroxyacid dehydrogenase family. PdxB subfamily. In terms of assembly, homodimer.

It is found in the cytoplasm. It carries out the reaction 4-phospho-D-erythronate + NAD(+) = (R)-3-hydroxy-2-oxo-4-phosphooxybutanoate + NADH + H(+). The protein operates within cofactor biosynthesis; pyridoxine 5'-phosphate biosynthesis; pyridoxine 5'-phosphate from D-erythrose 4-phosphate: step 2/5. In terms of biological role, catalyzes the oxidation of erythronate-4-phosphate to 3-hydroxy-2-oxo-4-phosphonooxybutanoate. The sequence is that of Erythronate-4-phosphate dehydrogenase from Escherichia coli (strain ATCC 8739 / DSM 1576 / NBRC 3972 / NCIMB 8545 / WDCM 00012 / Crooks).